A 108-amino-acid chain; its full sequence is MQKEKVNIKKNDKVKVVAGKDKGKIGKVLSVNREKNRLVVENINMIKRHTRPNVSNRQGGIIEREAPIDRSNVMLMCGKCVTPVRIKMKELEDGRKVRMCGKCKELID.

This sequence belongs to the universal ribosomal protein uL24 family. In terms of assembly, part of the 50S ribosomal subunit.

Its function is as follows. One of two assembly initiator proteins, it binds directly to the 5'-end of the 23S rRNA, where it nucleates assembly of the 50S subunit. In terms of biological role, one of the proteins that surrounds the polypeptide exit tunnel on the outside of the subunit. This is Large ribosomal subunit protein uL24 from Desulfosudis oleivorans (strain DSM 6200 / JCM 39069 / Hxd3) (Desulfococcus oleovorans).